The primary structure comprises 362 residues: Protein RecA (362 aa).

77-84 is a binding site for ATP; the sequence is GPESSGKT.

It belongs to the RecA family.

It localises to the cytoplasm. Its function is as follows. Can catalyze the hydrolysis of ATP in the presence of single-stranded DNA, the ATP-dependent uptake of single-stranded DNA by duplex DNA, and the ATP-dependent hybridization of homologous single-stranded DNAs. It interacts with LexA causing its activation and leading to its autocatalytic cleavage. The protein is Protein RecA of Rhizobium leguminosarum bv. trifolii (strain WSM2304).